The following is a 208-amino-acid chain: Large ribosomal subunit protein uL4 (208 aa).

Belongs to the universal ribosomal protein uL4 family. Part of the 50S ribosomal subunit.

Functionally, one of the primary rRNA binding proteins, this protein initially binds near the 5'-end of the 23S rRNA. It is important during the early stages of 50S assembly. It makes multiple contacts with different domains of the 23S rRNA in the assembled 50S subunit and ribosome. Forms part of the polypeptide exit tunnel. This is Large ribosomal subunit protein uL4 from Anaplasma marginale (strain Florida).